Reading from the N-terminus, the 96-residue chain is Small ribosomal subunit protein uS15 (96 aa).

Belongs to the universal ribosomal protein uS15 family. In terms of assembly, part of the 30S ribosomal subunit. Forms a bridge to the 50S subunit in the 70S ribosome, contacting the 23S rRNA.

In terms of biological role, one of the primary rRNA binding proteins, it binds directly to 16S rRNA where it helps nucleate assembly of the platform of the 30S subunit by binding and bridging several RNA helices of the 16S rRNA. Its function is as follows. Forms an intersubunit bridge (bridge B4) with the 23S rRNA of the 50S subunit in the ribosome. This is Small ribosomal subunit protein uS15 from Streptomyces griseus subsp. griseus (strain JCM 4626 / CBS 651.72 / NBRC 13350 / KCC S-0626 / ISP 5235).